Reading from the N-terminus, the 240-residue chain is uncharacterized protein (240 aa).

Residues 2–223 (VRIQDLSLAF…GNAPRELHQA (222 aa)) enclose the ABC transporter domain. 34 to 41 (GSSGVGKS) serves as a coordination point for ATP.

It belongs to the ABC transporter superfamily.

This is an uncharacterized protein from Haemophilus influenzae (strain ATCC 51907 / DSM 11121 / KW20 / Rd).